The sequence spans 1416 residues: Phospholipid-transporting ATPase VD (1416 aa).

Topologically, residues 1 to 97 (MTELLQWARH…PRNLFEQFHR (97 aa)) are cytoplasmic. A helical transmembrane segment spans residues 98-118 (AANLYFLFLVVLNWVPLVEAF). Residues 119–120 (QK) are Exoplasmic loop-facing. A helical membrane pass occupies residues 121-141 (EITMLPLVVVLTIIAIKDGLE). Over 142–321 (DYRKYKIDKQ…SKLERRANTD (180 aa)) the chain is Cytoplasmic. The helical transmembrane segment at 322-342 (VLWCVLLLIVMCLTGALGHGI) threads the bilayer. The Exoplasmic loop segment spans residues 343 to 365 (WLSRYENMLFFNIPEPDGRVISP). The helical transmembrane segment at 366 to 386 (VLTGFYVFWTMIILLQVLIPI) threads the bilayer. At 387-1110 (SLYVSIEIVK…HWCYTRLSNM (724 aa)) the chain is on the cytoplasmic side. The 4-aspartylphosphate intermediate role is filled by D438. ATP contacts are provided by D438, K439, and T440. D438 is a binding site for Mg(2+). Mg(2+) is bound at residue T440. The tract at residues 498-544 (AQGCRTVPSGPLGKPSAQLSGSTSAVGNGEGSGEVPHSRQAAFSSPM) is disordered. Residues 514–523 (AQLSGSTSAV) are compositionally biased toward polar residues. E729, F771, K795, R838, T918, G919, and D920 together coordinate ATP. Residues 971–990 (PELASSRKNFPQPSDAQGQG) are disordered. Polar residues predominate over residues 976–987 (SRKNFPQPSDAQ). Residues 993–1000 (GLVITGKT), R1027, and K1033 contribute to the ATP site. Residue D1053 participates in Mg(2+) binding. Residues N1056 and D1057 each coordinate ATP. D1057 is a Mg(2+) binding site. Residues 1111-1131 (ILYFFYKNVAYVNLLFWYQFF) traverse the membrane as a helical segment. Residues 1132-1142 (CGFSGTSMTDY) are Exoplasmic loop-facing. A helical transmembrane segment spans residues 1143 to 1163 (WVLIFFNLLFTSVPPIIYGVL). Residues 1164 to 1192 (EKDVSAETLLQLPELYRSGQRSEEYLPLT) lie on the Cytoplasmic side of the membrane. The chain crosses the membrane as a helical span at residues 1193–1213 (FWITLLDAFYQSLVCFFVPYF). Over 1214-1221 (TYQGSDID) the chain is Exoplasmic loop. A helical membrane pass occupies residues 1222–1242 (IFTFGNPLNTAALFIILLHLV). At 1243–1252 (IESKSLTWIH) the chain is on the cytoplasmic side. Residues 1253-1273 (MLVTVGSILSYFFFALAFGAL) form a helical membrane-spanning segment. Residues 1274 to 1289 (CVTCNPPSNPYGIMRK) are Exoplasmic loop-facing. Residues 1290-1310 (HMLDPVFYLVCVLTTFVALLP) traverse the membrane as a helical segment. Topologically, residues 1311–1416 (RFLYRVLQGS…ASKMTGSSAS (106 aa)) are cytoplasmic. A disordered region spans residues 1358–1416 (SKHASQSAAMSGRPTPGSSAVLAMKSATVSTVEQSTRETALDRGCSEPGASKMTGSSAS). Residue 1361 to 1368 (ASQSAAMS) coordinates ATP. Basic and acidic residues predominate over residues 1392 to 1402 (STRETALDRGC).

The protein belongs to the cation transport ATPase (P-type) (TC 3.A.3) family. Type IV subfamily. Component of a P4-ATPase flippase complex which consists of a catalytic alpha subunit ATP10A and an accessory beta subunit TMEM30A. The cofactor is Mg(2+). Autophosphorylated at the conserved aspartate of the P-type ATPase signature sequence. As to expression, expressed at low amounts in liver, brain, testes, and kidney (at protein level). Expressed in placenta.

It localises to the cell membrane. Its subcellular location is the endoplasmic reticulum membrane. The catalysed reaction is ATP + H2O + phospholipidSide 1 = ADP + phosphate + phospholipidSide 2.. The enzyme catalyses a beta-D-glucosyl-(1&lt;-&gt;1')-N-acylsphing-4-enine(out) + ATP + H2O = a beta-D-glucosyl-(1&lt;-&gt;1')-N-acylsphing-4-enine(in) + ADP + phosphate + H(+). Functionally, catalytic component of a P4-ATPase flippase complex, which catalyzes the hydrolysis of ATP coupled to the transport of glucosylceramide (GlcCer) from the outer to the inner leaflet of the plasma membrane. In Mus musculus (Mouse), this protein is Phospholipid-transporting ATPase VD (Atp10d).